The following is a 189-amino-acid chain: UPF0398 protein lhv_1265 (189 aa).

It belongs to the UPF0398 family.

The protein is UPF0398 protein lhv_1265 of Lactobacillus helveticus (strain DPC 4571).